The following is a 207-amino-acid chain: Inhibitor of hydrogen peroxide resistance (207 aa).

The segment at residues 163 to 182 (MNYIHQRTRVSRSVVAEVLA) is a DNA-binding region (H-T-H motif).

The protein belongs to the IprA family.

In terms of biological role, involved in oxidative stress resistance. This is Inhibitor of hydrogen peroxide resistance from Salmonella typhimurium (strain LT2 / SGSC1412 / ATCC 700720).